Here is a 333-residue protein sequence, read N- to C-terminus: MLVLGIESSCDETGVAVYDSESGLLSHALHSQIATHRVHGGVVPELASRDHVNYLVPLVDEVLTKAQIRKNQLDGIAYTAGPGLIGALLVGSCFAKSLAYALNIPALAIHHLEAHLLAAKMETPSLDFPFIALLVSGGHCQLIEVNNIGEYRLLGDTLDDAVGEAFDKTAKLMGIPYPGGAVLANLADQCLSTPYQFPRPMTDRPGLDFSFSGLKTHALNTWNQSEKKESDRSEIAKAFQQAVVETLIIKCKRAIKESQSKRLVVAGGVGANKALRSALQKWIKDIQGEVYFPALEYCTDNGAMVAYAGCLRMMRGEIDGGLGVIVKPRWPLA.

His-111 and His-115 together coordinate Fe cation. Residues 134–138, Asp-167, Gly-180, and Asn-272 each bind substrate; that span reads LVSGG. Position 300 (Asp-300) interacts with Fe cation.

Belongs to the KAE1 / TsaD family. Fe(2+) is required as a cofactor.

It is found in the cytoplasm. It carries out the reaction L-threonylcarbamoyladenylate + adenosine(37) in tRNA = N(6)-L-threonylcarbamoyladenosine(37) in tRNA + AMP + H(+). Required for the formation of a threonylcarbamoyl group on adenosine at position 37 (t(6)A37) in tRNAs that read codons beginning with adenine. Is involved in the transfer of the threonylcarbamoyl moiety of threonylcarbamoyl-AMP (TC-AMP) to the N6 group of A37, together with TsaE and TsaB. TsaD likely plays a direct catalytic role in this reaction. In Legionella pneumophila subsp. pneumophila (strain Philadelphia 1 / ATCC 33152 / DSM 7513), this protein is tRNA N6-adenosine threonylcarbamoyltransferase.